The chain runs to 168 residues: Small ribosomal subunit protein uS4 (168 aa).

An S4 RNA-binding domain is found at arginine 103–lysine 167.

Belongs to the universal ribosomal protein uS4 family. As to quaternary structure, part of the 30S ribosomal subunit. Contacts protein S5. The interaction surface between S4 and S5 is involved in control of translational fidelity.

One of the primary rRNA binding proteins, it binds directly to 16S rRNA where it nucleates assembly of the body of the 30S subunit. Its function is as follows. With S5 and S12 plays an important role in translational accuracy. This chain is Small ribosomal subunit protein uS4, found in Staphylothermus marinus (strain ATCC 43588 / DSM 3639 / JCM 9404 / F1).